Consider the following 392-residue polypeptide: MSNDYYEILGVSHDASADEIKKAYRRKAMKLHPDVAGPGSEEEFKKVQEAYEILQDPQKRAVFDRGGDPNARMGGFGEGGFSSAGFDFTNLVDAMFGGSSPFGSGGGRGPRSRTRRGQDALVRMRLSLAEAVFGVTKSLEVDTAVVCPKCQGKGAQSGSEPVTCDTCQGRGEVITVQRSFLGDIRTSQPCPTCHGYGTVIPDPCQECSGEGRVRTTRTINVKIPAGVADGNRIHLDSRGEVGPGGGPAGDLYIEMTVSPHDVFTRHGDDLEMVVTIPMTAAALGTKVPMHTLEADREDFAEDTKTVTVEVPAGTQSGTRIVVSERGVPRLRRNGRGDLGVTFIVQTPTKLDSHQKDLLRQLAEAREETNASASVEKSGGRGMFSRIKEAFGG.

The J domain occupies 4-67 (DYYEILGVSH…QKRAVFDRGG (64 aa)). A CR-type zinc finger spans residues 134–216 (GVTKSLEVDT…CSGEGRVRTT (83 aa)). 8 residues coordinate Zn(2+): cysteine 147, cysteine 150, cysteine 164, cysteine 167, cysteine 190, cysteine 193, cysteine 204, and cysteine 207. 4 CXXCXGXG motif repeats span residues 147–154 (CPKCQGKG), 164–171 (CDTCQGRG), 190–197 (CPTCHGYG), and 204–211 (CQECSGEG). The segment at 367–392 (ETNASASVEKSGGRGMFSRIKEAFGG) is disordered.

It belongs to the DnaJ family. In terms of assembly, homodimer. It depends on Zn(2+) as a cofactor.

The protein resides in the cytoplasm. In terms of biological role, participates actively in the response to hyperosmotic and heat shock by preventing the aggregation of stress-denatured proteins and by disaggregating proteins, also in an autonomous, DnaK-independent fashion. Unfolded proteins bind initially to DnaJ; upon interaction with the DnaJ-bound protein, DnaK hydrolyzes its bound ATP, resulting in the formation of a stable complex. GrpE releases ADP from DnaK; ATP binding to DnaK triggers the release of the substrate protein, thus completing the reaction cycle. Several rounds of ATP-dependent interactions between DnaJ, DnaK and GrpE are required for fully efficient folding. Also involved, together with DnaK and GrpE, in the DNA replication of plasmids through activation of initiation proteins. This chain is Chaperone protein DnaJ 1, found in Cutibacterium acnes (strain DSM 16379 / KPA171202) (Propionibacterium acnes).